Here is a 246-residue protein sequence, read N- to C-terminus: Myelin protein P0 (246 aa).

Positions Met1–Gly27 are cleaved as a signal peptide. Residues Ile28–Thr143 enclose the Ig-like V-type domain. Over Ile28 to Pro150 the chain is Extracellular. Residues Cys48 and Cys125 are joined by a disulfide bond. A glycan (N-linked (GlcNAc...) (complex) asparagine) is linked at Asn120. The chain crosses the membrane as a helical span at residues Val151 to Phe178. Over Arg179–Lys246 the chain is Cytoplasmic. The segment at Ala200–Lys246 is disordered. A compositionally biased stretch (basic and acidic residues) spans Ala231–Lys246.

Belongs to the myelin P0 protein family. Post-translationally, N-glycan is sulfated. Found only in peripheral nervous system Schwann cells.

The protein localises to the cell membrane. Creation of an extracellular membrane face which guides the wrapping process and ultimately compacts adjacent lamellae. This is Myelin protein P0 (mpz) from Heterodontus francisci (Horn shark).